We begin with the raw amino-acid sequence, 446 residues long: Tol-Pal system protein TolB (446 aa).

The first 19 residues, 1–19 (MLLRYLFILFIIIPIKAFA), serve as a signal peptide directing secretion.

It belongs to the TolB family. As to quaternary structure, the Tol-Pal system is composed of five core proteins: the inner membrane proteins TolA, TolQ and TolR, the periplasmic protein TolB and the outer membrane protein Pal. They form a network linking the inner and outer membranes and the peptidoglycan layer.

Its subcellular location is the periplasm. In terms of biological role, part of the Tol-Pal system, which plays a role in outer membrane invagination during cell division and is important for maintaining outer membrane integrity. In Pelagibacter ubique (strain HTCC1062), this protein is Tol-Pal system protein TolB.